The chain runs to 84 residues: Large ribosomal subunit protein bL27 (84 aa).

Positions 1-21 (MAHKKGAGSTKNGRDSKPKML) are disordered.

This sequence belongs to the bacterial ribosomal protein bL27 family.

This Dehalococcoides mccartyi (strain ATCC BAA-2100 / JCM 16839 / KCTC 5957 / BAV1) protein is Large ribosomal subunit protein bL27.